The primary structure comprises 489 residues: Phosphoenolpyruvate carboxykinase (ATP) (489 aa).

Residues Arg53 and Tyr159 each coordinate substrate. Residues His185, 208-216 (GLSGTGKTT), Asp258, Arg300, 409-410 (KI), and Ser415 each bind ATP. Arg300 contacts substrate.

It belongs to the phosphoenolpyruvate carboxykinase (ATP) family.

Its subcellular location is the cytoplasm. The catalysed reaction is oxaloacetate + ATP = phosphoenolpyruvate + ADP + CO2. Its pathway is carbohydrate biosynthesis; gluconeogenesis. In terms of biological role, involved in the gluconeogenesis. Catalyzes the conversion of oxaloacetate (OAA) to phosphoenolpyruvate (PEP) through direct phosphoryl transfer between the nucleoside triphosphate and OAA. This Aeropyrum pernix (strain ATCC 700893 / DSM 11879 / JCM 9820 / NBRC 100138 / K1) protein is Phosphoenolpyruvate carboxykinase (ATP).